We begin with the raw amino-acid sequence, 408 residues long: Serine/threonine transporter SstT (408 aa).

9 helical membrane-spanning segments follow: residues 19 to 39 (SLVS…VISP), 48 to 68 (LGSL…LVLV), 86 to 106 (IVGL…LLSF), 143 to 163 (VTAV…GLGF), 193 to 213 (FAPL…GFSA), 223 to 243 (VLLS…VFII), 294 to 314 (IPLG…VLTL), 322 to 342 (IEVS…SACG), and 367 to 387 (VAMQ…SAET).

Belongs to the dicarboxylate/amino acid:cation symporter (DAACS) (TC 2.A.23) family.

It localises to the cell inner membrane. The enzyme catalyses L-serine(in) + Na(+)(in) = L-serine(out) + Na(+)(out). It carries out the reaction L-threonine(in) + Na(+)(in) = L-threonine(out) + Na(+)(out). Its function is as follows. Involved in the import of serine and threonine into the cell, with the concomitant import of sodium (symport system). This chain is Serine/threonine transporter SstT, found in Colwellia psychrerythraea (strain 34H / ATCC BAA-681) (Vibrio psychroerythus).